Here is an 875-residue protein sequence, read N- to C-terminus: Serine/threonine-protein kinase D2 (875 aa).

Low complexity predominate over residues 1-12 (MAAAPSHPAGLP). The segment at 1 to 35 (MAAAPSHPAGLPGSPGPGSPPPPGGLDLQSPPPLL) is disordered. A compositionally biased stretch (pro residues) spans 14 to 35 (SPGPGSPPPPGGLDLQSPPPLL). S30 is modified (phosphoserine). A Phosphotyrosine modification is found at Y87. Residues 138-188 (PHALTVHSYRAPAFCDHCGEMLFGLVRQGLKCDGCGLNYHKRCAFSIPNNC) form a Phorbol-ester/DAG-type 1 zinc finger. A phosphoserine mark is found at S197, S198, S200, S203, S206, S211, S212, and S214. Residues 224–247 (RSTTDLLPRRPPSSSSSSSSSSFY) form a disordered region. The span at 236 to 245 (SSSSSSSSSS) shows a compositional bias: low complexity. S244 carries the post-translational modification Phosphoserine; by CSNK1D and CSNK1E. A Phosphoserine modification is found at S245. Residues 265–315 (PHTFLIHSYTRPTVCQACKKLLKGLFRQGLQCKDCKFNCHKRCATRVPNDC) form a Phorbol-ester/DAG-type 2 zinc finger. The interval 332 to 374 (DYSEADKSSISDELEDSGVIPGSHSESALHASEEEEGEGHKAQ) is disordered. Positions 398 to 510 (TTLREGWVVH…WETAIRQALM (113 aa)) constitute a PH domain. Y408 is modified (phosphotyrosine). Y439 bears the Phosphotyrosine; by ABL1 mark. Residue S519 is modified to Phosphoserine. The region spanning 552–808 (IFPDEVLGSG…VDKSLSHPWL (257 aa)) is the Protein kinase domain. Residues 558 to 566 (LGSGQFGVV) and K581 each bind ATP. D675 serves as the catalytic Proton acceptor. S707 is subject to Phosphoserine; by PKC. S711 is subject to Phosphoserine; by autocatalysis. At Y718 the chain carries Phosphotyrosine; by ABL1. An Important for ABL1-mediated Tyr-718 phosphorylation motif is present at residues 725–727 (LNQ). Residue S873 is modified to Phosphoserine; by autocatalysis.

This sequence belongs to the protein kinase superfamily. CAMK Ser/Thr protein kinase family. PKD subfamily. Interacts (via C-terminus) with LCK. Interacts (via N-terminus and zing-finger domain 1 and 2) with PRKCD in response to oxidative stress; the interaction is independent of PRKD2 tyrosine phosphorylation. Requires Mg(2+) as cofactor. In terms of processing, phosphorylation of Ser-873 correlates with the activation status of the kinase. Ser-707 is probably phosphorylated by PKC. Phosphorylation at Ser-244 by CSNK1D and CSNK1E promotes nuclear localization and substrate targeting. Phosphorylation at Ser-244, Ser-707 and Ser-711 is required for nuclear localization. Phosphorylated at Tyr-438 by ABL1 in response to oxidative stress. Phosphorylated at Tyr-718 by ABL1 specifically in response to oxidative stress; requires prior phosphorylation at Ser-707 or/and Ser-711.

It is found in the cytoplasm. Its subcellular location is the cell membrane. It localises to the golgi apparatus. The protein localises to the trans-Golgi network. The catalysed reaction is L-seryl-[protein] + ATP = O-phospho-L-seryl-[protein] + ADP + H(+). It carries out the reaction L-threonyl-[protein] + ATP = O-phospho-L-threonyl-[protein] + ADP + H(+). Activated by DAG and phorbol esters. Phorbol-ester/DAG-type domains bind DAG, mediating translocation to membranes. Autophosphorylation of Ser-711 and phosphorylation of Ser-707 by PKC relieves auto-inhibition by the PH domain. Catalytic activity is further increased by phosphorylation at Tyr-718 in response to oxidative stress. Its function is as follows. Serine/threonine-protein kinase that converts transient diacylglycerol (DAG) signals into prolonged physiological effects downstream of PKC, and is involved in the regulation of cell proliferation via MAPK1/3 (ERK1/2) signaling, oxidative stress-induced NF-kappa-B activation, inhibition of HDAC7 transcriptional repression, signaling downstream of T-cell antigen receptor (TCR) and cytokine production, and plays a role in Golgi membrane trafficking, angiogenesis, secretory granule release and cell adhesion. May potentiate mitogenesis induced by the neuropeptide bombesin by mediating an increase in the duration of MAPK1/3 (ERK1/2) signaling, which leads to accumulation of immediate-early gene products including FOS that stimulate cell cycle progression. In response to oxidative stress, is phosphorylated at Tyr-438 and Tyr-718 by ABL1, which leads to the activation of PRKD2 without increasing its catalytic activity, and mediates activation of NF-kappa-B. In response to the activation of the gastrin receptor CCKBR, is phosphorylated at Ser-244 by CSNK1D and CSNK1E, translocates to the nucleus, phosphorylates HDAC7, leading to nuclear export of HDAC7 and inhibition of HDAC7 transcriptional repression of NR4A1/NUR77. Upon TCR stimulation, is activated independently of ZAP70, translocates from the cytoplasm to the nucleus and is required for interleukin-2 (IL2) promoter up-regulation. During adaptive immune responses, is required in peripheral T-lymphocytes for the production of the effector cytokines IL2 and IFNG after TCR engagement and for optimal induction of antibody responses to antigens. In epithelial cells stimulated with lysophosphatidic acid (LPA), is activated through a PKC-dependent pathway and mediates LPA-stimulated interleukin-8 (IL8) secretion via a NF-kappa-B-dependent pathway. During TCR-induced T-cell activation, interacts with and is activated by the tyrosine kinase LCK, which results in the activation of the NFAT transcription factors. In the trans-Golgi network (TGN), regulates the fission of transport vesicles that are on their way to the plasma membrane and in polarized cells is involved in the transport of proteins from the TGN to the basolateral membrane. Plays an important role in endothelial cell proliferation and migration prior to angiogenesis, partly through modulation of the expression of KDR/VEGFR2 and FGFR1, two key growth factor receptors involved in angiogenesis. In secretory pathway, is required for the release of chromogranin-A (CHGA)-containing secretory granules from the TGN. Downstream of PRKCA, plays important roles in angiotensin-2-induced monocyte adhesion to endothelial cells. The sequence is that of Serine/threonine-protein kinase D2 (Prkd2) from Mus musculus (Mouse).